Reading from the N-terminus, the 233-residue chain is UPF0725 protein At4g17990 (233 aa).

Belongs to the UPF0725 (EMB2204) family.

This Arabidopsis thaliana (Mouse-ear cress) protein is UPF0725 protein At4g17990.